The chain runs to 717 residues: Polyribonucleotide nucleotidyltransferase (717 aa).

Residues Asp-486 and Asp-492 each contribute to the Mg(2+) site. The KH domain maps to 553 to 612; the sequence is PRMITVKINPEKIRDVIGKGGSTIQALTKETGCTIDIQEDGTITIASTSSEGMAEAKRRI. An S1 motif domain is found at 622–690; that stretch reads GKIYSGTVLK…EKGRMRLSIK (69 aa). The disordered stretch occupies residues 690-717; sequence KAAKAEEGDVPATAPQAPGAGDATSQQQ.

It belongs to the polyribonucleotide nucleotidyltransferase family. Requires Mg(2+) as cofactor.

The protein localises to the cytoplasm. The enzyme catalyses RNA(n+1) + phosphate = RNA(n) + a ribonucleoside 5'-diphosphate. Its function is as follows. Involved in mRNA degradation. Catalyzes the phosphorolysis of single-stranded polyribonucleotides processively in the 3'- to 5'-direction. This chain is Polyribonucleotide nucleotidyltransferase, found in Ralstonia nicotianae (strain ATCC BAA-1114 / GMI1000) (Ralstonia solanacearum).